The sequence spans 105 residues: Vacuolar ATPase assembly integral membrane protein VMA21 homolog (105 aa).

Residues methionine 1–serine 26 are disordered. At methionine 1–leucine 36 the chain is on the cytoplasmic side. The chain crosses the membrane as a helical span at residues phenylalanine 37–valine 57. The Lumenal segment spans residues leucine 58–lysine 68. Residues valine 69 to isoleucine 89 traverse the membrane as a helical segment. Residues tyrosine 90 to aspartate 105 lie on the Cytoplasmic side of the membrane.

The protein belongs to the VMA21 family.

The protein localises to the endoplasmic reticulum membrane. The protein resides in the endoplasmic reticulum-Golgi intermediate compartment membrane. Its subcellular location is the cytoplasmic vesicle. It is found in the COPII-coated vesicle membrane. In terms of biological role, required for the assembly of the V0 complex of the vacuolar ATPase (V-ATPase) in the endoplasmic reticulum. The protein is Vacuolar ATPase assembly integral membrane protein VMA21 homolog of Drosophila sechellia (Fruit fly).